The primary structure comprises 227 residues: Cleavage and polyadenylation specificity factor subunit 5 (227 aa).

S2 carries the N-acetylserine modification. Positions 2–147 (SVVPPNRSQT…DWVIDDCIGN (146 aa)) are necessary for RNA-binding. R15 bears the Omega-N-methylarginine mark. 2 positions are modified to N6-acetyllysine: K23 and K29. Y40 is subject to Phosphotyrosine. At K56 the chain carries N6-acetyllysine. Residues 76–201 (MRRTVEGVLI…KLVAAPLFEL (126 aa)) form the Nudix hydrolase domain. The necessary for interactions with PAPOLA and PABPN1 stretch occupies residues 81–160 (EGVLIVHEHR…PNFEPPQYPY (80 aa)). An interaction with RNA region spans residues 102–104 (TFF). Residues 109-130 (GELNPGEDEVEGLKRLMTEILG) carry the Nudix box motif.

This sequence belongs to the Nudix hydrolase family. CPSF5 subfamily. Homodimer (via N- and C-terminus); binds RNA as homodimer. Component of the cleavage factor Im (CFIm) complex which is a heterotetramer composed of two subunits of NUDT21/CPSF5 and two subunits of CPSF6 or CPSF7 or a heterodimer of CPSF6 and CPSF7. The cleavage factor Im (CFIm) complex associates with the CPSF and CSTF complexes to promote the assembly of the core mRNA 3'-processing machinery. Interacts with CPSF6 (via the RRM domain); this interaction is direct and enhances binding to RNA. Interacts with CPSF7. Interacts with FIP1L1; this interaction occurs in a RNA sequence-specific manner. Interacts with PABPN1. Interacts (via N-terminus) with PAPOLA (via C-terminus); this interaction is direct and diminished by acetylation. Interacts with SNRNP70. Interacts with VIRMA. Acetylated mainly by p300/CBP, recruited to the complex by CPSF6. Acetylation decreases interaction with PAPAO. Deacetylated by the class I/II HDACs, HDAC1, HDAC3 and HDAC10, and by the class III HDACs, SIRT1 and SIRT2.

It localises to the nucleus. The protein resides in the cytoplasm. Component of the cleavage factor Im (CFIm) complex that functions as an activator of the pre-mRNA 3'-end cleavage and polyadenylation processing required for the maturation of pre-mRNA into functional mRNAs. CFIm contributes to the recruitment of multiprotein complexes on specific sequences on the pre-mRNA 3'-end, so called cleavage and polyadenylation signals (pA signals). Most pre-mRNAs contain multiple pA signals, resulting in alternative cleavage and polyadenylation (APA) producing mRNAs with variable 3'-end formation. The CFIm complex acts as a key regulator of cleavage and polyadenylation site choice during APA through its binding to 5'-UGUA-3' elements localized in the 3'-untranslated region (UTR) for a huge number of pre-mRNAs. NUDT21/CPSF5 activates indirectly the mRNA 3'-processing machinery by recruiting CPSF6 and/or CPSF7. Binds to 5'-UGUA-3' elements localized upstream of pA signals that act as enhancers of pre-mRNA 3'-end processing. The homodimer mediates simultaneous sequence-specific recognition of two 5'-UGUA-3' elements within the pre-mRNA. Plays a role in somatic cell fate transitions and pluripotency by regulating widespread changes in gene expression through an APA-dependent function. Binds to chromatin. Binds to, but does not hydrolyze mono- and di-adenosine nucleotides. The protein is Cleavage and polyadenylation specificity factor subunit 5 (NUDT21) of Bos taurus (Bovine).